The primary structure comprises 1516 residues: Myosin-52 (1516 aa).

Residues 7–62 (YKGLQCWIPDEQSQWIPGSIKDCRVEGEKAFLTVQDENENETVITVKPDDLNYEGR) form the Myosin N-terminal SH3-like domain. The Myosin motor domain maps to 73 to 766 (SDADDLTDLS…VTPLLESARD (694 aa)). Position 167-174 (167-174 (GESGAGKT)) interacts with ATP. The interval 647–669 (LVSLMSTINETNAHYIRCIKPNE) is actin-binding. IQ domains are found at residues 793 to 813 (RKRV…RHTE), 818 to 838 (SSNI…KEFI), 840 to 865 (TKNS…EKTK), 866 to 886 (HDAT…KHYK), and 888 to 917 (LQYY…ESTK). A coiled-coil region spans residues 926–1034 (YRLESRLFEI…LKSQLKNYDM (109 aa)). 2 positions are modified to phosphoserine: serine 1065 and serine 1072. The Dilute domain occupies 1163-1431 (ERYCVHTLEY…SELSKNIVAE (269 aa)).

It belongs to the TRAFAC class myosin-kinesin ATPase superfamily. Myosin family.

It localises to the cytoplasm. Involved in cell wall deposition where it has a role in the localization of mok1. The chain is Myosin-52 (myo52) from Schizosaccharomyces pombe (strain 972 / ATCC 24843) (Fission yeast).